The sequence spans 1085 residues: Carbamoyl phosphate synthase large chain (1085 aa).

The carboxyphosphate synthetic domain stretch occupies residues 1-399 (MPKRTDISNI…ALQKALCSLE (399 aa)). Positions 127, 167, 174, 206, 208, 213, 239, 240, 241, 283, and 297 each coordinate ATP. Residues 131–326 (KEAMLKIGMD…IAKVATMLAV (196 aa)) enclose the ATP-grasp 1 domain. Residues Gln-283, Glu-297, and Asn-299 each contribute to the Mg(2+) site. Residues Gln-283, Glu-297, and Asn-299 each contribute to the Mn(2+) site. Positions 400-552 (NNWLGFESLS…APNPLPPIEN (153 aa)) are oligomerization domain. Residues 553–951 (KQEKKEKKIL…AFFKAQTACF (399 aa)) form a carbamoyl phosphate synthetic domain region. The ATP-grasp 2 domain occupies 678-871 (SLFLKELDIK…LAKVATRVMV (194 aa)). 10 residues coordinate ATP: Arg-714, Lys-756, Leu-758, Glu-763, Gly-788, Ile-789, His-790, Ser-791, Gln-830, and Glu-842. The Mg(2+) site is built by Gln-830, Glu-842, and Asn-844. Gln-830, Glu-842, and Asn-844 together coordinate Mn(2+). The 134-residue stretch at 952–1085 (NPIKNKGLIF…ELLALQDYLK (134 aa)) folds into the MGS-like domain. An allosteric domain region spans residues 952-1085 (NPIKNKGLIF…ELLALQDYLK (134 aa)).

Belongs to the CarB family. Composed of two chains; the small (or glutamine) chain promotes the hydrolysis of glutamine to ammonia, which is used by the large (or ammonia) chain to synthesize carbamoyl phosphate. Tetramer of heterodimers (alpha,beta)4. Requires Mg(2+) as cofactor. Mn(2+) is required as a cofactor.

It catalyses the reaction hydrogencarbonate + L-glutamine + 2 ATP + H2O = carbamoyl phosphate + L-glutamate + 2 ADP + phosphate + 2 H(+). The enzyme catalyses hydrogencarbonate + NH4(+) + 2 ATP = carbamoyl phosphate + 2 ADP + phosphate + 2 H(+). Its pathway is amino-acid biosynthesis; L-arginine biosynthesis; carbamoyl phosphate from bicarbonate: step 1/1. The protein operates within pyrimidine metabolism; UMP biosynthesis via de novo pathway; (S)-dihydroorotate from bicarbonate: step 1/3. Its function is as follows. Large subunit of the glutamine-dependent carbamoyl phosphate synthetase (CPSase). CPSase catalyzes the formation of carbamoyl phosphate from the ammonia moiety of glutamine, carbonate, and phosphate donated by ATP, constituting the first step of 2 biosynthetic pathways, one leading to arginine and/or urea and the other to pyrimidine nucleotides. The large subunit (synthetase) binds the substrates ammonia (free or transferred from glutamine from the small subunit), hydrogencarbonate and ATP and carries out an ATP-coupled ligase reaction, activating hydrogencarbonate by forming carboxy phosphate which reacts with ammonia to form carbamoyl phosphate. This Helicobacter pylori (strain ATCC 700392 / 26695) (Campylobacter pylori) protein is Carbamoyl phosphate synthase large chain.